The primary structure comprises 275 residues: Ribosomal RNA small subunit methyltransferase A (275 aa).

Residues asparagine 21, leucine 23, glycine 48, glutamate 69, aspartate 94, and asparagine 115 each contribute to the S-adenosyl-L-methionine site.

The protein belongs to the class I-like SAM-binding methyltransferase superfamily. rRNA adenine N(6)-methyltransferase family. RsmA subfamily.

It localises to the cytoplasm. It carries out the reaction adenosine(1518)/adenosine(1519) in 16S rRNA + 4 S-adenosyl-L-methionine = N(6)-dimethyladenosine(1518)/N(6)-dimethyladenosine(1519) in 16S rRNA + 4 S-adenosyl-L-homocysteine + 4 H(+). Functionally, specifically dimethylates two adjacent adenosines (A1518 and A1519) in the loop of a conserved hairpin near the 3'-end of 16S rRNA in the 30S particle. May play a critical role in biogenesis of 30S subunits. The sequence is that of Ribosomal RNA small subunit methyltransferase A from Clostridium botulinum (strain Kyoto / Type A2).